The chain runs to 274 residues: 2,3,4,5-tetrahydropyridine-2,6-dicarboxylate N-succinyltransferase (274 aa).

Substrate-binding residues include Arg-104 and Asp-141.

Belongs to the transferase hexapeptide repeat family. In terms of assembly, homotrimer.

The protein localises to the cytoplasm. The enzyme catalyses (S)-2,3,4,5-tetrahydrodipicolinate + succinyl-CoA + H2O = (S)-2-succinylamino-6-oxoheptanedioate + CoA. It functions in the pathway amino-acid biosynthesis; L-lysine biosynthesis via DAP pathway; LL-2,6-diaminopimelate from (S)-tetrahydrodipicolinate (succinylase route): step 1/3. This Serratia proteamaculans (strain 568) protein is 2,3,4,5-tetrahydropyridine-2,6-dicarboxylate N-succinyltransferase.